The chain runs to 382 residues: Apolipoprotein A-IV (382 aa).

A signal peptide spans 1–20; that stretch reads MFLKAVVLTLSLVAVTGAQA. 13 consecutive repeat copies span residues 33 to 54, 60 to 81, 82 to 103, 115 to 136, 137 to 158, 159 to 180, 181 to 202, 203 to 224, 225 to 246, 247 to 268, 269 to 286, 287 to 308, and 309 to 330. The segment at 33–330 is 13 X 22 AA approximate tandem repeats; sequence DYFSQLSNNA…QVEELRQKLG (298 aa).

This sequence belongs to the apolipoprotein A1/A4/E family. As to quaternary structure, homodimer. In terms of processing, phosphorylation sites are present in the extracellular medium.

Its subcellular location is the secreted. Functionally, may have a role in chylomicrons and VLDL secretion and catabolism. Required for efficient activation of lipoprotein lipase by ApoC-II; potent activator of LCAT. Apoa-IV is a major component of HDL and chylomicrons. This is Apolipoprotein A-IV (APOA4) from Neomonachus schauinslandi (Hawaiian monk seal).